Reading from the N-terminus, the 70-residue chain is SPbeta prophage-derived uncharacterized protein YorZ (70 aa).

This Bacillus subtilis (strain 168) protein is SPbeta prophage-derived uncharacterized protein YorZ (yorZ).